The following is a 290-amino-acid chain: Fructose-1,6-bisphosphatase class 1 (290 aa).

Positions 78, 96, 98, and 99 each coordinate Mg(2+). Substrate-binding positions include 99 to 102 (DGSS), Tyr201, and Lys226. Residue Glu232 coordinates Mg(2+).

This sequence belongs to the FBPase class 1 family. Homotetramer. The cofactor is Mg(2+).

Its subcellular location is the cytoplasm. It carries out the reaction beta-D-fructose 1,6-bisphosphate + H2O = beta-D-fructose 6-phosphate + phosphate. It functions in the pathway carbohydrate biosynthesis; gluconeogenesis. This is Fructose-1,6-bisphosphatase class 1 from Helicobacter pylori (strain ATCC 700392 / 26695) (Campylobacter pylori).